A 112-amino-acid chain; its full sequence is DNA-binding protein Mboo_1886 (112 aa).

This sequence belongs to the PDCD5 family.

The polypeptide is DNA-binding protein Mboo_1886 (Methanoregula boonei (strain DSM 21154 / JCM 14090 / 6A8)).